A 669-amino-acid polypeptide reads, in one-letter code: DNA ligase (669 aa).

Residues 34 to 38, 83 to 84, and glutamate 114 each bind NAD(+); these read DAEYD and SL. The active-site N6-AMP-lysine intermediate is lysine 116. NAD(+)-binding residues include arginine 137, glutamate 171, lysine 287, and lysine 311. Zn(2+)-binding residues include cysteine 405, cysteine 408, cysteine 423, and cysteine 428. A BRCT domain is found at 591-669; it reads NVESYFAGKT…EERFLQELNK (79 aa).

The protein belongs to the NAD-dependent DNA ligase family. LigA subfamily. The cofactor is Mg(2+). It depends on Mn(2+) as a cofactor.

The enzyme catalyses NAD(+) + (deoxyribonucleotide)n-3'-hydroxyl + 5'-phospho-(deoxyribonucleotide)m = (deoxyribonucleotide)n+m + AMP + beta-nicotinamide D-nucleotide.. Its function is as follows. DNA ligase that catalyzes the formation of phosphodiester linkages between 5'-phosphoryl and 3'-hydroxyl groups in double-stranded DNA using NAD as a coenzyme and as the energy source for the reaction. It is essential for DNA replication and repair of damaged DNA. In Bacillus cereus (strain ATCC 10987 / NRS 248), this protein is DNA ligase.